The sequence spans 1321 residues: Lysine-specific demethylase 3A (1321 aa).

A phosphoserine mark is found at serine 264 and serine 325. 3 disordered regions span residues 307-336, 383-402, and 438-472; these read ATPPSKDPRQQSTPQAANSPPNLGAKIPQG, LTEPKGSCTQPKTNTDQENR, and KHLEHAPSPSDVSNAPEVKAGVNSDSPNNCSGKKV. Polar residues predominate over residues 316–327; the sequence is QQSTPQAANSPP. Position 445 is a phosphoserine (serine 445). The C6-type zinc-finger motif lies at 662–687; the sequence is CDVCDTTIFNLHWVCPRCGFGVCVDC. A Phosphoserine modification is found at serine 766. An LXXLL motif motif is present at residues 885–889; it reads LRNLL. Position 895 is an N6-acetyllysine (lysine 895). In terms of domain architecture, JmjC spans 1058 to 1281; sequence MPSRFDDLMA…HCFWLTQEFR (224 aa). Fe cation is bound by residues histidine 1120, aspartate 1122, and histidine 1249.

The protein belongs to the JHDM2 histone demethylase family. In terms of assembly, interacts with VRK1. The cofactor is Fe(2+).

Its subcellular location is the cytoplasm. The protein resides in the nucleus. The enzyme catalyses N(6),N(6)-dimethyl-L-lysyl(9)-[histone H3] + 2 2-oxoglutarate + 2 O2 = L-lysyl(9)-[histone H3] + 2 formaldehyde + 2 succinate + 2 CO2. In terms of biological role, histone demethylase that specifically demethylates 'Lys-9' of histone H3, thereby playing a central role in histone code. Preferentially demethylates mono- and dimethylated H3 'Lys-9' residue, with a preference for dimethylated residue, while it has weak or no activity on trimethylated H3 'Lys-9'. Demethylation of Lys residue generates formaldehyde and succinate. Involved in hormone-dependent transcriptional activation, by participating in recruitment to androgen-receptor target genes, resulting in H3 'Lys-9' demethylation and transcriptional activation. Involved in spermatogenesis by regulating expression of target genes such as PRM1 and TNP1 which are required for packaging and condensation of sperm chromatin. Involved in obesity resistance through regulation of metabolic genes such as PPARA and UCP1. This is Lysine-specific demethylase 3A (KDM3A) from Homo sapiens (Human).